A 645-amino-acid chain; its full sequence is Protein FAM47B (645 aa).

3 stretches are compositionally biased toward basic and acidic residues: residues 1–11, 238–251, and 288–299; these read MGDRRPQDRPR, EPPETRASHLRVDP, and PETRVSHLHPEP. Disordered stretches follow at residues 1–23 and 168–321; these read MGDRRPQDRPRSQGMDSKPWYCD and AREK…SLCP.

This sequence belongs to the FAM47 family.

This Homo sapiens (Human) protein is Protein FAM47B (FAM47B).